Reading from the N-terminus, the 563-residue chain is Arginine--tRNA ligase (563 aa).

The 'HIGH' region signature appears at 121 to 131; that stretch reads PNIAKPFSIGH.

It belongs to the class-I aminoacyl-tRNA synthetase family. As to quaternary structure, monomer.

It is found in the cytoplasm. It carries out the reaction tRNA(Arg) + L-arginine + ATP = L-arginyl-tRNA(Arg) + AMP + diphosphate. In Streptococcus pneumoniae (strain ATCC BAA-255 / R6), this protein is Arginine--tRNA ligase.